A 94-amino-acid polypeptide reads, in one-letter code: MLKPLGDRVVLKIEEKEQTVGGFVLAGSAQEKTKTAQVVATGQGVRTLNGDLVAPSVKTGDRVLVEAHAGLDVKDGDEKYIIVGEANILAIIEE.

The protein belongs to the GroES chaperonin family. As to quaternary structure, heptamer of 7 subunits arranged in a ring. Interacts with the chaperonin GroEL.

The protein resides in the cytoplasm. In terms of biological role, together with the chaperonin GroEL, plays an essential role in assisting protein folding. The GroEL-GroES system forms a nano-cage that allows encapsulation of the non-native substrate proteins and provides a physical environment optimized to promote and accelerate protein folding. GroES binds to the apical surface of the GroEL ring, thereby capping the opening of the GroEL channel. The sequence is that of Co-chaperonin GroES from Streptococcus pneumoniae (strain Hungary19A-6).